The following is a 354-amino-acid chain: Guanine nucleotide-binding protein alpha-3 subunit (354 aa).

G2 carries the N-myristoyl glycine lipid modification. The S-palmitoyl cysteine moiety is linked to residue C4. The 322-residue stretch at 33 to 354 folds into the G-alpha domain; that stretch reads KECKILLLGS…TNALKDSGIL (322 aa). The segment at 36–49 is G1 motif; that stretch reads KILLLGSGESGKST. GTP contacts are provided by residues 41-48, 177-183, 202-206, 271-274, and A326; these read GSGESGKS, LRARSKT, DVGGQ, and NKID. The Mg(2+) site is built by S48 and T183. The interval 175 to 183 is G2 motif; the sequence is DVLRARSKT. The tract at residues 198-207 is G3 motif; the sequence is IHLFDVGGQR. The interval 267–274 is G4 motif; that stretch reads ILFLNKID. Residues 324–329 are G5 motif; the sequence is TQATDT.

The protein belongs to the G-alpha family. As to quaternary structure, g proteins are composed of 3 units; alpha, beta and gamma. The alpha chain contains the guanine nucleotide binding site.

Guanine nucleotide-binding proteins (G proteins) are involved as modulators or transducers in various transmembrane signaling systems. This subunit is involved in cAMP regulation and morphogenesis. It is essential for dimorphic switching in haploid cells. The sequence is that of Guanine nucleotide-binding protein alpha-3 subunit (FIL1) from Ustilago hordei (Barley covered smut fungus).